The sequence spans 252 residues: NLP effector protein Pc118356 (252 aa).

The first 17 residues, 1–17 (MALTVLAATALTALIMG), serve as a signal peptide directing secretion. N20 and N67 each carry an N-linked (GlcNAc...) asparagine glycan. The short motif at 121 to 127 (QDRHFWE) is the Hepta-peptide GHRHDWE motif element. The N-linked (GlcNAc...) asparagine glycan is linked to N166.

This sequence belongs to the Necrosis inducing protein (NPP1) family.

It is found in the secreted. Functionally, secreted effector that contributes strongly to virulence during infection by P.capsici. The protein is NLP effector protein Pc118356 of Phytophthora capsici.